The following is a 350-amino-acid chain: Galactokinase (350 aa).

Residue Glu14–Asp17 participates in substrate binding. Residues Ser46 and Gly96–Ser102 each bind ATP. 2 residues coordinate Mg(2+): Ser102 and Glu134. Asp146 (proton acceptor) is an active-site residue. A substrate-binding site is contributed by Tyr196.

Belongs to the GHMP kinase family. GalK subfamily.

The protein resides in the cytoplasm. It catalyses the reaction alpha-D-galactose + ATP = alpha-D-galactose 1-phosphate + ADP + H(+). It functions in the pathway carbohydrate metabolism; galactose metabolism. Functionally, catalyzes the transfer of the gamma-phosphate of ATP to D-galactose to form alpha-D-galactose-1-phosphate (Gal-1-P). The chain is Galactokinase from Thermotoga neapolitana (strain ATCC 49049 / DSM 4359 / NBRC 107923 / NS-E).